The primary structure comprises 481 residues: Xylulose kinase (481 aa).

Position 81-82 (81-82) interacts with substrate; sequence QH. The active-site Proton acceptor is D239.

The protein belongs to the FGGY kinase family.

The catalysed reaction is D-xylulose + ATP = D-xylulose 5-phosphate + ADP + H(+). Its function is as follows. Catalyzes the phosphorylation of D-xylulose to D-xylulose 5-phosphate. The chain is Xylulose kinase from Streptomyces coelicolor (strain ATCC BAA-471 / A3(2) / M145).